The chain runs to 462 residues: tRNA-2-methylthio-N(6)-dimethylallyladenosine synthase (462 aa).

The 117-residue stretch at 28–144 folds into the MTTase N-terminal domain; that stretch reads KKLFVKTYGC…LPKMMEAVNA (117 aa). Residues Cys-37, Cys-73, Cys-107, Cys-181, Cys-185, and Cys-188 each contribute to the [4Fe-4S] cluster site. The Radical SAM core domain occupies 167-398; sequence ATRGPTAFLT…QALLTQQQRA (232 aa). Residues 401-462 form the TRAM domain; the sequence is DAMVGRRVKV…KTNSLTGRLV (62 aa).

It belongs to the methylthiotransferase family. MiaB subfamily. As to quaternary structure, monomer. The cofactor is [4Fe-4S] cluster.

Its subcellular location is the cytoplasm. The catalysed reaction is N(6)-dimethylallyladenosine(37) in tRNA + (sulfur carrier)-SH + AH2 + 2 S-adenosyl-L-methionine = 2-methylsulfanyl-N(6)-dimethylallyladenosine(37) in tRNA + (sulfur carrier)-H + 5'-deoxyadenosine + L-methionine + A + S-adenosyl-L-homocysteine + 2 H(+). In terms of biological role, catalyzes the methylthiolation of N6-(dimethylallyl)adenosine (i(6)A), leading to the formation of 2-methylthio-N6-(dimethylallyl)adenosine (ms(2)i(6)A) at position 37 in tRNAs that read codons beginning with uridine. This chain is tRNA-2-methylthio-N(6)-dimethylallyladenosine synthase, found in Jannaschia sp. (strain CCS1).